A 167-amino-acid chain; its full sequence is Homing endonuclease I-ApeII (167 aa).

This sequence belongs to the LAGLIDADG endonuclease family.

Endonuclease involved in rRNA intron I-gamma homing. The sequence is that of Homing endonuclease I-ApeII (apeII) from Aeropyrum pernix (strain ATCC 700893 / DSM 11879 / JCM 9820 / NBRC 100138 / K1).